A 417-amino-acid polypeptide reads, in one-letter code: CinA-like protein (417 aa).

It belongs to the CinA family.

This chain is CinA-like protein, found in Synechococcus sp. (strain RCC307).